The sequence spans 593 residues: MKLDELRKKYIDFFKSKGHCEIAGKSLIPDNDSTVLFNTAGMQPLVPYLLGEMHPSGDMLVDVQKCLRTGDIDEVGDLSHLTFFEMLGNWSLGAYFKELSVKYSFEFLTSPNYLNISKDKLYVSVFEGDESIPRDTETANVWESLGIPKDRIFYLSREHNFWGPVGNTGPCGPDTEIFVDTGKEKCSVRCDITCSCGKYFEIWNNVFMQYKRDENGNYEELKRKCVDTGMGIERTITFLQGKSSVYDTDAFKPIIDKIEKISGKIYGQNLEDDRSIRIIADHIKASCFILADNFAVLPSNIGQGYVLRRIIRRAIRYAKKLGMESYVLADLVDSVEEIYKSFYKELTEKKDFIKAELNVEEEKFFKTLRHGEQEFIKLIQQLSSKSIPGDISFKLYDTYGFPYEITEELATEYGFSIDKAGFEEHFKKHQEVSKKGGDKVFKGGLADCTYETTKLHTATHLLHKALQLVLGEHVRQKGSNITAERLRFDFNHPYKMTDDEIKQVEDMVNLQIKNKLSVKRSVMNLDDALAKGAMALFGEKYEDIVSVYEIDGFSIEVCGGPHVKNTGELGTFKIQKEQASSSGVRRIRAILID.

Zn(2+) is bound by residues H456, H460, C558, and H562.

Belongs to the class-II aminoacyl-tRNA synthetase family. Zn(2+) serves as cofactor.

The protein resides in the cytoplasm. It carries out the reaction tRNA(Ala) + L-alanine + ATP = L-alanyl-tRNA(Ala) + AMP + diphosphate. Catalyzes the attachment of alanine to tRNA(Ala) in a two-step reaction: alanine is first activated by ATP to form Ala-AMP and then transferred to the acceptor end of tRNA(Ala). Also edits incorrectly charged Ser-tRNA(Ala) and Gly-tRNA(Ala) via its editing domain. In Borrelia hermsii (strain HS1 / DAH), this protein is Alanine--tRNA ligase (alaS).